The following is a 243-amino-acid chain: uncharacterized protein (243 aa).

The interval 71–120 (KRTNVSQRNRKKGIKNNRPHKDINSSPDWGNAHRGTDWQSEKANGMNRAK) is disordered. Over residues 78–88 (RNRKKGIKNNR) the composition is skewed to basic residues. Residue Ser96 is modified to Phosphoserine.

This is an uncharacterized protein from Saccharomyces cerevisiae (strain ATCC 204508 / S288c) (Baker's yeast).